Consider the following 110-residue polypeptide: Nucleoid-associated protein ESA_02800 (110 aa).

The segment at 89 to 110 (QKEKMASVSSGMQLPPGFKMPF) is disordered.

It belongs to the YbaB/EbfC family. Homodimer.

It localises to the cytoplasm. The protein resides in the nucleoid. Binds to DNA and alters its conformation. May be involved in regulation of gene expression, nucleoid organization and DNA protection. The sequence is that of Nucleoid-associated protein ESA_02800 from Cronobacter sakazakii (strain ATCC BAA-894) (Enterobacter sakazakii).